The primary structure comprises 251 residues: uncharacterized protein (251 aa).

This sequence belongs to the PaiB family.

This is an uncharacterized protein from Emericella nidulans (strain FGSC A4 / ATCC 38163 / CBS 112.46 / NRRL 194 / M139) (Aspergillus nidulans).